The following is a 207-amino-acid chain: 3-demethoxyubiquinol 3-hydroxylase (207 aa).

6 residues coordinate Fe cation: Glu56, Glu86, His89, Glu138, Glu170, and His173.

The protein belongs to the COQ7 family. Fe cation serves as cofactor.

The protein localises to the cell membrane. The enzyme catalyses a 5-methoxy-2-methyl-3-(all-trans-polyprenyl)benzene-1,4-diol + AH2 + O2 = a 3-demethylubiquinol + A + H2O. It functions in the pathway cofactor biosynthesis; ubiquinone biosynthesis. In terms of biological role, catalyzes the hydroxylation of 2-nonaprenyl-3-methyl-6-methoxy-1,4-benzoquinol during ubiquinone biosynthesis. The chain is 3-demethoxyubiquinol 3-hydroxylase from Cupriavidus taiwanensis (strain DSM 17343 / BCRC 17206 / CCUG 44338 / CIP 107171 / LMG 19424 / R1) (Ralstonia taiwanensis (strain LMG 19424)).